The chain runs to 646 residues: Preterminal protein (646 aa).

The short motif at 357-366 (RLPVRRRRRR) is the Nuclear localization signal element. The residue at position 555 (S555) is an O-(5'-phospho-DNA)-serine. The disordered stretch occupies residues 619-646 (LHADVPLPPLQANPHPPLPPDARPQRTM). Over residues 624–640 (PLPPLQANPHPPLPPDA) the composition is skewed to pro residues.

The protein belongs to the adenoviridae terminal protein family. As to quaternary structure, heterodimer with the polymerase; this heterodimer binds to bp 9 to 18 of the genome. Interacts with host POU2F1; POU2F1 binds to the auxiliary sequences in the inverted terminal repeats and tethers the pTP-POL heterodimer to the origin DNA thereby participating in the assembly of the pre-initiation complex (POL-TP-DBP-NFIA-POU2F1). Post-translationally, preterminal protein is used to replicate viral genome, upon genomic encapsidation it is processed first into iTP and finally into TP by adenovirus protease.

It is found in the host nucleus matrix. Protein covalently bound to the viral DNA that acts as a primer for viral genomic replication by DNA strand displacement. Assembles on the viral origin of replication in an initiation complex with viral polymerase, DBP, host NFIA and host POU2F1/OCT1. During initiation, the polymerase covalently couples the first dCTP with Ser-580 of pTP. The terminal protein stimulates the template activity over 20 fold compared to protein-free templates. Neo-synthesized viral genomes are linked to two preterminal proteins, one for each 5' end. These new genomes are encapsidated in the nucleus, and during capsid maturation by viral protease, preterminal protein is first cleaved into intermediary (iTP), then into mature TP. May play a role in host nuclear matrix localization of genomic DNA. The polypeptide is Preterminal protein (Homo sapiens (Human)).